A 413-amino-acid polypeptide reads, in one-letter code: Multifunctional CCA protein (413 aa).

2 residues coordinate ATP: Gly8 and Arg11. Gly8 and Arg11 together coordinate CTP. Mg(2+) contacts are provided by Asp21 and Asp23. Residues Arg91, Arg143, and Arg146 each coordinate ATP. Residues Arg91, Arg143, and Arg146 each coordinate CTP. The HD domain maps to 232-333 (TGVHVMMVID…VRLLERADAL (102 aa)).

This sequence belongs to the tRNA nucleotidyltransferase/poly(A) polymerase family. Bacterial CCA-adding enzyme type 1 subfamily. Monomer. Can also form homodimers and oligomers. It depends on Mg(2+) as a cofactor. The cofactor is Ni(2+).

It carries out the reaction a tRNA precursor + 2 CTP + ATP = a tRNA with a 3' CCA end + 3 diphosphate. The catalysed reaction is a tRNA with a 3' CCA end + 2 CTP + ATP = a tRNA with a 3' CCACCA end + 3 diphosphate. In terms of biological role, catalyzes the addition and repair of the essential 3'-terminal CCA sequence in tRNAs without using a nucleic acid template. Adds these three nucleotides in the order of C, C, and A to the tRNA nucleotide-73, using CTP and ATP as substrates and producing inorganic pyrophosphate. tRNA 3'-terminal CCA addition is required both for tRNA processing and repair. Also involved in tRNA surveillance by mediating tandem CCA addition to generate a CCACCA at the 3' terminus of unstable tRNAs. While stable tRNAs receive only 3'-terminal CCA, unstable tRNAs are marked with CCACCA and rapidly degraded. The sequence is that of Multifunctional CCA protein from Burkholderia pseudomallei (strain 668).